A 224-amino-acid polypeptide reads, in one-letter code: uncharacterized protein (224 aa).

Zn(2+) is bound by residues His57, His59, Asp61, His62, His138, Asp162, and His203.

Belongs to the metallo-beta-lactamase superfamily. Glyoxalase II family. Zn(2+) serves as cofactor.

This is an uncharacterized protein from Mycobacterium tuberculosis (strain CDC 1551 / Oshkosh).